The chain runs to 241 residues: MSTIPFSPKQKPDESTLTDRQRKVLDAIRTHIDEQGFAPSFREIGNAAGLKSPSSVKHQLQVLEDKGFIRMNANKGRAIEVVAGSAPNAEKPSQASEEATSTSNVAEIYQFPAEAIAESHDVPLVGRIAAGVPITAEQHVDDVMRLPERLTGSGTLFMLEVHGDSMVDAAICDGDYVVVREQNSAVNGDIVAALLDDEATVKTFRKENGHVWLMPHNPAYSPIDGTHATIMGKVVTVLRKL.

The segment at residues 41–61 is a DNA-binding region (H-T-H motif); it reads FREIGNAAGLKSPSSVKHQLQ. Catalysis depends on for autocatalytic cleavage activity residues S165 and K202.

Belongs to the peptidase S24 family. Homodimer.

The catalysed reaction is Hydrolysis of Ala-|-Gly bond in repressor LexA.. Functionally, represses a number of genes involved in the response to DNA damage (SOS response), including recA and lexA. In the presence of single-stranded DNA, RecA interacts with LexA causing an autocatalytic cleavage which disrupts the DNA-binding part of LexA, leading to derepression of the SOS regulon and eventually DNA repair. The polypeptide is LexA repressor (Bifidobacterium longum (strain DJO10A)).